Consider the following 688-residue polypeptide: Glycine--tRNA ligase beta subunit (688 aa).

Belongs to the class-II aminoacyl-tRNA synthetase family. As to quaternary structure, tetramer of two alpha and two beta subunits.

The protein resides in the cytoplasm. It carries out the reaction tRNA(Gly) + glycine + ATP = glycyl-tRNA(Gly) + AMP + diphosphate. The protein is Glycine--tRNA ligase beta subunit of Histophilus somni (strain 2336) (Haemophilus somnus).